A 300-amino-acid polypeptide reads, in one-letter code: Transcription factor DUO1 (300 aa).

HTH myb-type domains are found at residues 8–64 (KEEI…RPNL) and 65–116 (KNGC…KRLA). 2 consecutive DNA-binding regions (H-T-H motif) follow at residues 36-60 (WSSI…VNKL) and 89-112 (WARI…SSRQ). The span at 123-135 (SDASSSSFNPKSS) shows a compositional bias: low complexity. Residues 123–145 (SDASSSSFNPKSSSSHRLKGKNV) are disordered. The segment covering 136 to 145 (SSHRLKGKNV) has biased composition (basic residues).

In terms of tissue distribution, confined to inflorescences, especially in stamens and pollen.

It is found in the nucleus. In terms of biological role, transcription activator that acts as a positive regulator of male germline development by promoting both gametic cell specification and cell cycle progression. Binds to canonical MYB sites 5'-AACCGTC-3', 5'-AAACCGC-3' and 5'-AACCGT-3' in promoters to trigger the expression of male germline-specific or enriched genes (e.g. MGH3, GEX2 and GCS1), including those required for fertilization. Required for sperm cell specification leading to pollen maturation by activating a germline-specific regulon. Involved in pollen mitosis entry at G2-M transition via the regulation of CYCB1-1, DAZ1 and DAZ2 expression. The polypeptide is Transcription factor DUO1 (Arabidopsis thaliana (Mouse-ear cress)).